The sequence spans 1321 residues: MSDSVILRSVKKFGEENHAFESDGFHNNDKKSRLQDKKKGEGARVGFFELFRFSSSKDNWLMFMGSVCALLHGMAQPGMIIVFGILTDIFVEYDIERQELSIPEKVCMNNTIVWINSSFNQNMTNGTSCGLVDINSEVIKFSGIYAGVGVAVLILGYFQIRLWVITGARQIRKMRKFYFRRIMRMEIGWFDCTSVGELNSRFSDDINKIDEAIADQMALFLQRLSTALSGLLLGFYRGWKLTLVILAVSPLIGIGAAVIGLSVAKFTELELKAYAKAGSIADEVLSSIRTVAAFGGENKEVERYEKNLMFAQRWGIWKGMVMGFFTGYMWCLIFFCYALAFWYGSRLVLDEGEYTPGTLIQIFLCVIIAAMNIGNASSCLEIFSTGCSAASSIFQTIDRQPVMDCMSGDGYKLDRIKGEIEFHNVTFHYPSRPEVKILNNLSMVIKPGETTAFVGSSGAGKSTALQLIQRFYDPCEGMVTLDGHDIRSLNIRWLRDQIGIVEQEPVLFSTTIAENIRLGREEATMEDIVQAAKDANAYNFIMALPQQFDTLVGEGGGQMSGGQKQRVAIARALIRKPKILLLDMATSALDNESEAKVQGALNKIQHGHTIISVAHRLSTVRSADVIIGFEHGTAVERGTHEELLERKGVYFMLVTLQSQEDNTHKETGIKGKDTTEGDTPERTFSRGSYQDSLRASIRQRSKSQLSHLSHEPPLAIGDHKSSYEDRKDNDVLVEEVEPAPVRRILKYNISEWPYILVGALCAAINGAVTPIYSLLFSQILKTFSLVDKEQQRSEIYSMCLFFVILGCVSLFTQFLQGYNFAKSGELLTKRLRKFGFKAMLRQDIGWFDDLKNNPGVLTTRLATDASQVQGATGSQVGMMVNSFTNIFVAVLIAFLFNWKLSLVISVFFPFLALSGAVQTKMLTGFASQDKEILEKAGQITNEALSNIRTVAGIGVEGRFIKAFEVELEKSYKTAIRKANVYGLCYAFSQGISFLANSAAYRYGGYLIVYEDLNFSYVFRVVSSIAMSATAVGRTFSYTPSYAKAKISAARFFQLLDRKPPIDVYSGAGEKWDNFQGKIDFIDCKFTYPSRPDIQVLNGLSVSVDPGQTLAFVGSSGCGKSTSIQLLERFYDPDQGTVMIDGHDSKKVNVQFLRSNIGIVSQEPVLFDCSIMDNIKYGDNTKEISVERAIAAAKQAQLHDFVMSLPEKYETNVGIQGSQLSRGEKQRIAIARAIVRDPKILLLDEATSALDTESEKTVQLALDKAREGRTCIVIAHRLSTIQNSDIIAVMSQGVVIEKGTHKKLMDQKGAYYKLVITGAPIS.

Residues 1 to 62 (MSDSVILRSV…FSSSKDNWLM (62 aa)) lie on the Cytoplasmic side of the membrane. The region spanning 62-385 (MFMGSVCALL…ASSCLEIFST (324 aa)) is the ABC transmembrane type-1 1 domain. A helical transmembrane segment spans residues 63 to 83 (FMGSVCALLHGMAQPGMIIVF). The Extracellular segment spans residues 84-147 (GILTDIFVEY…VIKFSGIYAG (64 aa)). N-linked (GlcNAc...) asparagine glycosylation is found at N109, N116, N122, and N125. The chain crosses the membrane as a helical span at residues 148-168 (VGVAVLILGYFQIRLWVITGA). The Cytoplasmic segment spans residues 169 to 215 (RQIRKMRKFYFRRIMRMEIGWFDCTSVGELNSRFSDDINKIDEAIAD). The helical transmembrane segment at 216-236 (QMALFLQRLSTALSGLLLGFY) threads the bilayer. Over 237-240 (RGWK) the chain is Extracellular. The helical transmembrane segment at 241-261 (LTLVILAVSPLIGIGAAVIGL) threads the bilayer. Over 262–319 (SVAKFTELELKAYAKAGSIADEVLSSIRTVAAFGGENKEVERYEKNLMFAQRWGIWKG) the chain is Cytoplasmic. A helical membrane pass occupies residues 320–340 (MVMGFFTGYMWCLIFFCYALA). Over 341-353 (FWYGSRLVLDEGE) the chain is Extracellular. Residues 354-374 (YTPGTLIQIFLCVIIAAMNIG) traverse the membrane as a helical segment. At 375–755 (NASSCLEIFS…KYNISEWPYI (381 aa)) the chain is on the cytoplasmic side. Residues 420 to 656 (IEFHNVTFHY…KGVYFMLVTL (237 aa)) enclose the ABC transporter 1 domain. 455-462 (GSSGAGKS) serves as a coordination point for ATP. T586 bears the Phosphothreonine mark. Residue S587 is modified to Phosphoserine. The segment at 651–674 (FMLVTLQSQEDNTHKETGIKGKDT) is interaction with HAX1. Residues 662–684 (NTHKETGIKGKDTTEGDTPERTF) are compositionally biased toward basic and acidic residues. The segment at 662–722 (NTHKETGIKG…PLAIGDHKSS (61 aa)) is disordered. Phosphoserine occurs at positions 692, 703, and 706. An ABC transmembrane type-1 2 domain is found at 755–1043 (ILVGALCAAI…TFSYTPSYAK (289 aa)). Residues 756-776 (LVGALCAAINGAVTPIYSLLF) traverse the membrane as a helical segment. At 777–794 (SQILKTFSLVDKEQQRSE) the chain is on the extracellular side. Residues 795–815 (IYSMCLFFVILGCVSLFTQFL) traverse the membrane as a helical segment. The Cytoplasmic portion of the chain corresponds to 816 to 869 (QGYNFAKSGELLTKRLRKFGFKAMLRQDIGWFDDLKNNPGVLTTRLATDASQVQ). Transmembrane regions (helical) follow at residues 870 to 890 (GATG…FVAV) and 891 to 911 (LIAF…FPFL). Residues 912 to 979 (ALSGAVQTKM…SYKTAIRKAN (68 aa)) are Cytoplasmic-facing. Residues 980–1000 (VYGLCYAFSQGISFLANSAAY) form a helical membrane-spanning segment. The Extracellular portion of the chain corresponds to 1001–1011 (RYGGYLIVYED). Residues 1012–1032 (LNFSYVFRVVSSIAMSATAVG) form a helical membrane-spanning segment. Residues 1033 to 1321 (RTFSYTPSYA…KLVITGAPIS (289 aa)) are Cytoplasmic-facing. The ABC transporter 2 domain maps to 1078-1316 (IDFIDCKFTY…KGAYYKLVIT (239 aa)). 1113-1120 (GSSGCGKS) lines the ATP pocket. S1321 is subject to Phosphoserine.

The protein belongs to the ABC transporter superfamily. ABCB family. Multidrug resistance exporter (TC 3.A.1.201) subfamily. Interacts with HAX1. Interacts with the adapter protein complex 2 (AP-2) throught AP2A2 or AP2A1; this interaction regulates cell membrane expression of ABCB11 through its internalization in a clathrin-dependent manner and its subsequent degradation. N-glycosylated. Post-translationally, ubiquitinated; short-chain ubiquitination regulates cell-Surface expression of ABCB11. As to expression, expressed predominantly, if not exclusively in the liver, where it was further localized to the canalicular microvilli and to subcanalicular vesicles of the hepatocytes by in situ.

It is found in the apical cell membrane. Its subcellular location is the recycling endosome membrane. The protein localises to the endosome. It localises to the cell membrane. It catalyses the reaction cholate(in) + ATP + H2O = cholate(out) + ADP + phosphate + H(+). The enzyme catalyses taurocholate(in) + ATP + H2O = taurocholate(out) + ADP + phosphate + H(+). It carries out the reaction glycocholate(in) + ATP + H2O = glycocholate(out) + ADP + phosphate + H(+). The catalysed reaction is glycochenodeoxycholate(in) + ATP + H2O = glycochenodeoxycholate(out) + ADP + phosphate + H(+). It catalyses the reaction taurochenodeoxycholate(in) + ATP + H2O = taurochenodeoxycholate(out) + ADP + phosphate + H(+). The enzyme catalyses glycoursodeoxycholate(in) + ATP + H2O = glycoursodeoxycholate(out) + ADP + phosphate + H(+). It carries out the reaction tauroursodeoxycholate(in) + ATP + H2O = tauroursodeoxycholate(out) + ADP + phosphate + H(+). The catalysed reaction is taurodeoxycholate(in) + ATP + H2O = taurodeoxycholate(out) + ADP + phosphate + H(+). It catalyses the reaction taurolithocholate 3-sulfate(in) + ATP + H2O = taurolithocholate 3-sulfate(out) + ADP + phosphate + H(+). The enzyme catalyses pravastatin(in) + ATP + H2O = pravastatin(out) + ADP + phosphate + H(+). With respect to regulation, the uptake of taurocholate is inhibited by taurolithocholate sulfate with an IC(50) of 9 uM. Pravastatin competitively inhibits the transport of taurocholic acid. Cyclosporin A, glibenclamide, rifampicin and troglitazonestrongly competitively inhibit the transport activity of taurocholate. The canalicular transport activity of taurocholate is strongly dependent on canalicular membrane cholesterol content. The uptake of taurocholate is increased by short- and medium-chain fatty acids. Cholesterol increases transport capacity of taurocholate without affecting the affinity for the substrate. Functionally, catalyzes the transport of the major hydrophobic bile salts, such as taurine and glycine-conjugated cholic acid across the canalicular membrane of hepatocytes in an ATP-dependent manner, therefore participates in hepatic bile acid homeostasis and consequently to lipid homeostasis through regulation of biliary lipid secretion in a bile salts dependent manner. Transports taurine-conjugated bile salts more rapidly than glycine-conjugated bile salts. Also transports non-bile acid compounds, such as pravastatin and fexofenadine in an ATP-dependent manner and may be involved in their biliary excretion. The polypeptide is Bile salt export pump (Mus musculus (Mouse)).